The chain runs to 215 residues: ER lumen protein-retaining receptor A (215 aa).

Residues 1–2 (MN) are Lumenal-facing. Residues 3–21 (IFRFAGDMSHLISVLILLL) traverse the membrane as a helical segment. Residues 22–35 (KIYATKSCAGISLK) lie on the Cytoplasmic side of the membrane. The helical transmembrane segment at 36–53 (TQELYALVFLTRYLDLFT) threads the bilayer. The Lumenal segment spans residues 54-61 (DYVSLYNS). A helical membrane pass occupies residues 62–82 (IMKIVFIASSLAIVWCMRRHP). The Cytoplasmic segment spans residues 83–98 (LVRRSYDKDLDTFRHQ). The chain crosses the membrane as a helical span at residues 99-112 (YVVLACFVLGLILN). Topologically, residues 113–119 (EKFTVQE) are lumenal. A helical transmembrane segment spans residues 120-139 (VFWAFSIYLEAVAILPQLVL). Residues 140 to 151 (LQRSGNVDNLTG) lie on the Cytoplasmic side of the membrane. Residues 152-170 (QYVVFLGAYRGLYIINWIY) traverse the membrane as a helical segment. At 171 to 181 (RYFTEDHFTRW) the chain is on the lumenal side. Residues 182–202 (IACVSGLVQTALYADFFYYYY) traverse the membrane as a helical segment. At 203 to 215 (ISWKTNTKLKLPA) the chain is on the cytoplasmic side.

Belongs to the ERD2 family.

It localises to the endoplasmic reticulum membrane. Functionally, required for the retention of luminal endoplasmic reticulum proteins. Determines the specificity of the luminal ER protein retention system. Also required for normal vesicular traffic through the Golgi. This receptor recognizes H-D-E-L. In Arabidopsis thaliana (Mouse-ear cress), this protein is ER lumen protein-retaining receptor A (ERD2A).